The chain runs to 105 residues: Large ribosomal subunit protein uL24 (105 aa).

Residues 75–105 (DSDGNPTRVGYRTDEESGKRVRISRKNGKDI) form a disordered region. Residues 94–105 (RVRISRKNGKDI) show a composition bias toward basic residues.

It belongs to the universal ribosomal protein uL24 family. As to quaternary structure, part of the 50S ribosomal subunit.

One of two assembly initiator proteins, it binds directly to the 5'-end of the 23S rRNA, where it nucleates assembly of the 50S subunit. Functionally, one of the proteins that surrounds the polypeptide exit tunnel on the outside of the subunit. This chain is Large ribosomal subunit protein uL24, found in Rhodococcus jostii (strain RHA1).